Consider the following 644-residue polypeptide: Threonine--tRNA ligase (644 aa).

The 61-residue stretch at Met1–Thr61 folds into the TGS domain. The segment at Asp243 to Pro536 is catalytic. Residues Cys336, His387, and His513 each contribute to the Zn(2+) site.

The protein belongs to the class-II aminoacyl-tRNA synthetase family. Homodimer. The cofactor is Zn(2+).

Its subcellular location is the cytoplasm. It catalyses the reaction tRNA(Thr) + L-threonine + ATP = L-threonyl-tRNA(Thr) + AMP + diphosphate + H(+). In terms of biological role, catalyzes the attachment of threonine to tRNA(Thr) in a two-step reaction: L-threonine is first activated by ATP to form Thr-AMP and then transferred to the acceptor end of tRNA(Thr). Also edits incorrectly charged L-seryl-tRNA(Thr). This chain is Threonine--tRNA ligase, found in Maricaulis maris (strain MCS10) (Caulobacter maris).